A 417-amino-acid polypeptide reads, in one-letter code: Tyrosine--tRNA ligase (417 aa).

Tyr40 provides a ligand contact to L-tyrosine. A 'HIGH' region motif is present at residues 45–54 (ATAASLHVGH). Positions 177 and 181 each coordinate L-tyrosine. Positions 237-241 (KMGKS) match the 'KMSKS' region motif. An ATP-binding site is contributed by Lys240. Residues 351-414 (ISVVQLITRS…AGRKRHALIK (64 aa)) enclose the S4 RNA-binding domain.

The protein belongs to the class-I aminoacyl-tRNA synthetase family. TyrS type 1 subfamily. As to quaternary structure, homodimer.

It is found in the cytoplasm. The enzyme catalyses tRNA(Tyr) + L-tyrosine + ATP = L-tyrosyl-tRNA(Tyr) + AMP + diphosphate + H(+). Catalyzes the attachment of tyrosine to tRNA(Tyr) in a two-step reaction: tyrosine is first activated by ATP to form Tyr-AMP and then transferred to the acceptor end of tRNA(Tyr). The polypeptide is Tyrosine--tRNA ligase (Dinoroseobacter shibae (strain DSM 16493 / NCIMB 14021 / DFL 12)).